A 173-amino-acid chain; its full sequence is Small ribosomal subunit protein uS5 (173 aa).

An S5 DRBM domain is found at 18-81 (YVEKLVKLNR…EKAKANMVTF (64 aa)).

The protein belongs to the universal ribosomal protein uS5 family. Part of the 30S ribosomal subunit. Contacts proteins S4 and S8.

Its function is as follows. With S4 and S12 plays an important role in translational accuracy. Functionally, located at the back of the 30S subunit body where it stabilizes the conformation of the head with respect to the body. This Treponema denticola (strain ATCC 35405 / DSM 14222 / CIP 103919 / JCM 8153 / KCTC 15104) protein is Small ribosomal subunit protein uS5.